Reading from the N-terminus, the 339-residue chain is Dihydroorotate dehydrogenase (quinone) (339 aa).

FMN is bound by residues 64 to 68 (AGADK) and T88. K68 serves as a coordination point for substrate. 113-117 (NRNGF) is a substrate binding site. The FMN site is built by N141 and N174. A substrate-binding site is contributed by N174. S177 (nucleophile) is an active-site residue. A substrate-binding site is contributed by N179. Positions 219 and 247 each coordinate FMN. Residue 248–249 (NT) participates in substrate binding. FMN contacts are provided by residues G270, G299, and 320-321 (YS).

It belongs to the dihydroorotate dehydrogenase family. Type 2 subfamily. Monomer. It depends on FMN as a cofactor.

The protein resides in the cell membrane. It catalyses the reaction (S)-dihydroorotate + a quinone = orotate + a quinol. The protein operates within pyrimidine metabolism; UMP biosynthesis via de novo pathway; orotate from (S)-dihydroorotate (quinone route): step 1/1. Its function is as follows. Catalyzes the conversion of dihydroorotate to orotate with quinone as electron acceptor. This is Dihydroorotate dehydrogenase (quinone) from Haemophilus influenzae (strain PittEE).